The following is a 511-amino-acid chain: Bifunctional purine biosynthesis protein PurH (511 aa).

The 145-residue stretch at Met-1–Val-145 folds into the MGS-like domain.

The protein belongs to the PurH family.

The catalysed reaction is (6R)-10-formyltetrahydrofolate + 5-amino-1-(5-phospho-beta-D-ribosyl)imidazole-4-carboxamide = 5-formamido-1-(5-phospho-D-ribosyl)imidazole-4-carboxamide + (6S)-5,6,7,8-tetrahydrofolate. It catalyses the reaction IMP + H2O = 5-formamido-1-(5-phospho-D-ribosyl)imidazole-4-carboxamide. It functions in the pathway purine metabolism; IMP biosynthesis via de novo pathway; 5-formamido-1-(5-phospho-D-ribosyl)imidazole-4-carboxamide from 5-amino-1-(5-phospho-D-ribosyl)imidazole-4-carboxamide (10-formyl THF route): step 1/1. Its pathway is purine metabolism; IMP biosynthesis via de novo pathway; IMP from 5-formamido-1-(5-phospho-D-ribosyl)imidazole-4-carboxamide: step 1/1. In Bacillus thuringiensis subsp. konkukian (strain 97-27), this protein is Bifunctional purine biosynthesis protein PurH.